The sequence spans 316 residues: C-type lectin domain family 10 member A (316 aa).

The Cytoplasmic segment spans residues 1–39 (MTRTYENFQYLENKVKVQGFKNGPLPLQSLLQRLCSGPC). Positions 5 to 8 (YENF) match the Endocytosis signal motif. Residues 40-60 (HLLLSLGLGLLLLVIICVVGF) traverse the membrane as a helical; Signal-anchor for type II membrane protein segment. The Extracellular portion of the chain corresponds to 61–316 (QNSKFQRDLV…GLGQTSQESH (256 aa)). Residues Asn78 and Asn173 are each glycosylated (N-linked (GlcNAc...) asparagine). Residues 85–176 (AEIQALTSQG…VATLNNNAST (92 aa)) adopt a coiled-coil conformation. Intrachain disulfides connect Cys181/Cys192, Cys209/Cys304, and Cys282/Cys296. A C-type lectin domain is found at 188 to 305 (HQDSCYWFSH…CQRPYHWVCE (118 aa)). Residues Val218, Asn220, Glu224, and Asp243 each contribute to the Ca(2+) site. 2 residues coordinate a glycoprotein: Gln267 and Asp269. Ca(2+)-binding residues include Asp269, Asp270, Glu280, and Asp281. Glu280 is an a glycoprotein binding site. Positions 286 and 292 each coordinate a glycoprotein. Residues Asn292, Asp293, and Glu305 each contribute to the Ca(2+) site.

Interacts with A-, B- and C-domain containing PTPRC/CD45 isoforms: isoform 1/CD45ABC, isoform 3/CD45AB, isoform 5/CD45BC and isoform 7/CD45B. Does not interact with PTPRC/CD45 isoform 2/CD45RO, a memory T cell marker. As to expression, expressed in myeloid antigen presenting cells in lymph nodes and skin (at protein level). Expressed in dermal dendritic cells (at protein level).

It is found in the cell membrane. Its subcellular location is the early endosome membrane. The protein localises to the lysosome membrane. Its function is as follows. C-type lectin receptor involved in recognition of N-acetylgalactosamine (GalNAc)-terminated glycans by myeloid antigen presenting cells (APCs). Binds in a Ca(2+)-dependent manner to alpha- and beta-linked GalNAc residues on glycoprotein and glycolipid antigens, including alphaGalNAc- and Galbeta1-&gt;3GalNAc-O-Ser/Thr also known as Tn and T antigens, LacdiNAc epitope GalNAcbeta1-&gt;4GlcNAc and its derivative GalNAcbeta1-&gt;4-(Fucalpha1-&gt;3)GlcNAc, O-linked core 5 and 6 glycans, and GM2 and GD2 gangliosides. Acts as a signaling receptor at the interface of APC-T cell interactions. On immature dendritic cells, recognizes Tn antigen-carrying PTPRC/CD45 receptor on effector T cells and downregulates PTRPN/CD45 phosphatase activity with an impact on T cell activation threshold, cytokine production and proliferation. Modulates dendritic cell maturation toward a tolerogenic phenotype leading to generation of regulatory CD4-positive T cell subset with immune suppressive functions. Acts as an endocytic pattern recognition receptor involved in antitumor immunity. During tumorigenesis, recognizes Tn antigens and its sialylated forms Neu5Ac-Tn and Neu5Gc-Tn expressed on tumor cell mucins. On immature dendritic cells, can internalize Tn-terminated immunogens and target them to endolysosomal compartment for MHC class I and II antigen presentation to CD8-positive and CD4-positive T cells, respectively. The sequence is that of C-type lectin domain family 10 member A from Homo sapiens (Human).